The following is a 110-amino-acid chain: Co-chaperonin GroES (110 aa).

The protein belongs to the GroES chaperonin family. In terms of assembly, heptamer of 7 subunits arranged in a ring. Interacts with the chaperonin GroEL.

Its subcellular location is the cytoplasm. In terms of biological role, together with the chaperonin GroEL, plays an essential role in assisting protein folding. The GroEL-GroES system forms a nano-cage that allows encapsulation of the non-native substrate proteins and provides a physical environment optimized to promote and accelerate protein folding. GroES binds to the apical surface of the GroEL ring, thereby capping the opening of the GroEL channel. This chain is Co-chaperonin GroES, found in Mycoplasma genitalium (strain ATCC 33530 / DSM 19775 / NCTC 10195 / G37) (Mycoplasmoides genitalium).